Reading from the N-terminus, the 295-residue chain is Trimeric intracellular cation channel type A (295 aa).

At 1-11 the chain is on the lumenal side; sequence MELLSALSLDD. The chain crosses the membrane as a helical span at residues 12–32; it reads LAVAFSKLPVFPLFDVAYYII. The Cytoplasmic segment spans residues 33–51; sequence SILYLKYEPGAVDLSKRSP. A helical transmembrane segment spans residues 52–72; it reads VASWLCAMLYCFGSYILADVL. Residues 73 to 84 lie on the Lumenal side of the membrane; that stretch reads LGESPIHYFSNN. Residue G74 participates in Ca(2+) binding. The helical transmembrane segment at 85 to 105 threads the bilayer; it reads ANILLASAVWYLTFFCPLNIF. Residues 106–144 are Cytoplasmic-facing; sequence YKIVSFLPLKLVLVGMKEVVRVRKIAMGIHHAHHHYHHG. Residues K122 and R126 each contribute to the a 1,2-diacyl-sn-glycero-3-phospho-(1D-myo-inositol-4,5-bisphosphate) site. Residues 145-165 form a helical membrane-spanning segment; sequence WVIMVLIGWVKGSGVALMSNL. Topologically, residues 166–178 are lumenal; the sequence is EQLLRGVWKPETN. A helical membrane pass occupies residues 179 to 199; that stretch reads EILHMSFPTKASLYGAILFTL. The Cytoplasmic segment spans residues 200–201; sequence QQ. The chain crosses the membrane as a helical span at residues 202–222; the sequence is AHWLPISKAYLIFFFTLFMAI. Topologically, residues 223–233 are lumenal; it reads CKIYMTATHSH. Residues 234–254 traverse the membrane as a helical segment; the sequence is GSPFAIFESGICCVLFGAANG. Residues 255-295 lie on the Cytoplasmic side of the membrane; sequence DHDDHGDHHHHHDDHDVSHSTVKSKEELNEGTRKRKTKKAE. A compositionally biased stretch (basic and acidic residues) spans 259-286; that stretch reads HGDHHHHHDDHDVSHSTVKSKEELNEGT. Residues 259–295 form a disordered region; sequence HGDHHHHHDDHDVSHSTVKSKEELNEGTRKRKTKKAE.

It belongs to the TMEM38 family. As to quaternary structure, homotrimer; conformation seems to be controled by binding to diacylglycerol (DAG).

Its subcellular location is the sarcoplasmic reticulum membrane. The protein resides in the nucleus membrane. The catalysed reaction is K(+)(in) = K(+)(out). Channel activity is activated by a change of voltage within the sarcoplasmic reticulum lumen and blocked by luminal high Ca(2+) levels. Intracellular monovalent cation channel required for maintenance of rapid intracellular calcium release. Acts as a potassium counter-ion channel that functions in synchronization with calcium release from intracellular stores. Opened by a change of voltage within the sarcoplasmic reticulum lumen. This is Trimeric intracellular cation channel type A (tmem38a) from Xenopus tropicalis (Western clawed frog).